A 420-amino-acid chain; its full sequence is Glucose-1-phosphate adenylyltransferase (420 aa).

Alpha-D-glucose 1-phosphate-binding positions include Tyr107, Gly172, 187 to 188 (EK), and Ser205.

This sequence belongs to the bacterial/plant glucose-1-phosphate adenylyltransferase family. Homotetramer.

The catalysed reaction is alpha-D-glucose 1-phosphate + ATP + H(+) = ADP-alpha-D-glucose + diphosphate. It participates in glycan biosynthesis; glycogen biosynthesis. Involved in the biosynthesis of ADP-glucose, a building block required for the elongation reactions to produce glycogen. Catalyzes the reaction between ATP and alpha-D-glucose 1-phosphate (G1P) to produce pyrophosphate and ADP-Glc. The chain is Glucose-1-phosphate adenylyltransferase from Rhizobium radiobacter (Agrobacterium tumefaciens).